The primary structure comprises 317 residues: Olfactory receptor 10A5 (317 aa).

The Extracellular segment spans residues 1–26 (MAIGNWTEISEFILMSFSSLPTEIQS). A glycan (N-linked (GlcNAc...) asparagine) is linked at Asn5. Residues 27–47 (LLFLTFLTIYLVTLKGNSLII) form a helical membrane-spanning segment. The Cytoplasmic portion of the chain corresponds to 48–55 (LVTLADPM). The helical transmembrane segment at 56 to 76 (LHSPMYFFLRNLSFLEIGFNL) threads the bilayer. Over 77–100 (VIVPKMLGTLLAQDTTISFLGCAT) the chain is Extracellular. The cysteines at positions 98 and 190 are disulfide-linked. A helical transmembrane segment spans residues 101 to 121 (QMYFFFFFGVAECFLLATMAY). Topologically, residues 122–140 (DRYVAICSPLHYPVIMNQR) are cytoplasmic. The chain crosses the membrane as a helical span at residues 141–161 (TRAKLAAASWFPGFPVATVQT). The Extracellular segment spans residues 162–198 (TWLFSFPFCGTNKVNHFFCDSPPVLKLVCADTALFEI). The helical transmembrane segment at 199–218 (YAIVGTILVVMIPCLLILCS) threads the bilayer. The Cytoplasmic portion of the chain corresponds to 219-238 (YTRIAAAILKIPSAKGKHKA). The chain crosses the membrane as a helical span at residues 239–259 (FSTCSSHLLVVSLFYISSSLT). Over 260-272 (YFWPKSNNSPESK) the chain is Extracellular. A helical transmembrane segment spans residues 273 to 293 (KLLSLSYTVVTPMLNPIIYSL). Residues 294–317 (RNSEVKNALSRTFHKVLALRNCIP) lie on the Cytoplasmic side of the membrane.

It belongs to the G-protein coupled receptor 1 family. Expressed in the tongue.

It localises to the cell membrane. In terms of biological role, odorant receptor (Potential). May be involved in taste perception. This is Olfactory receptor 10A5 (OR10A5) from Homo sapiens (Human).